Here is a 386-residue protein sequence, read N- to C-terminus: 5-amino-6-(D-ribitylamino)uracil--L-tyrosine 4-hydroxyphenyl transferase (386 aa).

A Radical SAM core domain is found at 56–303 (VSYVINRNLN…MAVARLYLGD (248 aa)). [4Fe-4S] cluster is bound by residues Cys70, Cys74, and Cys77.

Belongs to the radical SAM superfamily. CofH family. Consists of two subunits, CofG and CofH. [4Fe-4S] cluster is required as a cofactor.

It catalyses the reaction 5-amino-6-(D-ribitylamino)uracil + L-tyrosine + S-adenosyl-L-methionine = 5-amino-5-(4-hydroxybenzyl)-6-(D-ribitylimino)-5,6-dihydrouracil + 2-iminoacetate + 5'-deoxyadenosine + L-methionine + H(+). It participates in cofactor biosynthesis; coenzyme F0 biosynthesis. Its function is as follows. Catalyzes the radical-mediated synthesis of 5-amino-5-(4-hydroxybenzyl)-6-(D-ribitylimino)-5,6-dihydrouracil from 5-amino-6-(D-ribitylamino)uracil and L-tyrosine. The polypeptide is 5-amino-6-(D-ribitylamino)uracil--L-tyrosine 4-hydroxyphenyl transferase (Synechococcus elongatus (strain ATCC 33912 / PCC 7942 / FACHB-805) (Anacystis nidulans R2)).